We begin with the raw amino-acid sequence, 431 residues long: Tol-Pal system protein TolB (431 aa).

An N-terminal signal peptide occupies residues 1 to 26 (MSLMTKLGFRALVASCLITAGSAANA). Positions 406–431 (DGSAPPQILSVQGGSVREPSWGPFMQ) are disordered.

Belongs to the TolB family. In terms of assembly, the Tol-Pal system is composed of five core proteins: the inner membrane proteins TolA, TolQ and TolR, the periplasmic protein TolB and the outer membrane protein Pal. They form a network linking the inner and outer membranes and the peptidoglycan layer.

The protein localises to the periplasm. Functionally, part of the Tol-Pal system, which plays a role in outer membrane invagination during cell division and is important for maintaining outer membrane integrity. The protein is Tol-Pal system protein TolB of Burkholderia cenocepacia (strain ATCC BAA-245 / DSM 16553 / LMG 16656 / NCTC 13227 / J2315 / CF5610) (Burkholderia cepacia (strain J2315)).